Here is a 1342-residue protein sequence, read N- to C-terminus: DNA-directed RNA polymerase subunit beta (1342 aa).

The protein belongs to the RNA polymerase beta chain family. In terms of assembly, the RNAP catalytic core consists of 2 alpha, 1 beta, 1 beta' and 1 omega subunit. When a sigma factor is associated with the core the holoenzyme is formed, which can initiate transcription.

The enzyme catalyses RNA(n) + a ribonucleoside 5'-triphosphate = RNA(n+1) + diphosphate. Its function is as follows. DNA-dependent RNA polymerase catalyzes the transcription of DNA into RNA using the four ribonucleoside triphosphates as substrates. This Aeromonas hydrophila subsp. hydrophila (strain ATCC 7966 / DSM 30187 / BCRC 13018 / CCUG 14551 / JCM 1027 / KCTC 2358 / NCIMB 9240 / NCTC 8049) protein is DNA-directed RNA polymerase subunit beta.